The following is a 475-amino-acid chain: METTVTAVSGTTSSSVGHGAGGGAARVLLLPSPGAQGHTNPMLQLGRRLAYHGLRPTLVATRYVLSTTPAPGAPFDVAAISDGFDAGGMALCPDPAEYFSRLEAVGSETLRELLLSEARAGRPVRVLVYDAHLAWARRVAQASGVAAAAFFSQPCSVDVVYGELWAGRLALPATDGRALLARGVLGVELGLEDMPPFAAVPESQPAFLQVSVGQFEGLDYADDVLVNSFRDIEPKEVEYMELTWRAKMVGPTLPSYYLGDGRLPSNKSYGFDLFNSDVECMDWLEKQMNSSVVLVSYGTVSNYDATQLEELGNGLCNSSKPFLWVVRSNEEHKLSEELKEKCGKIGLIVSWCPQLEVLAHRAIGCFVTHCGWNSTLEALVNGVPFVGIPHWADQPTIAKYVESAWGMGVRARKNKNGCLKKEEVERCIREVMDGERKDEYKKNAMNWMQKAKEAMQEGGSSDKHVAEFATKYSSI.

A compositionally biased stretch (low complexity) spans 1-17 (METTVTAVSGTTSSSVG). Residues 1–20 (METTVTAVSGTTSSSVGHGA) form a disordered region. UDP-alpha-D-glucose contacts are provided by residues His38, Ser152, Thr299, Cys352, 369–377 (HCGWNSTLE), and 393–394 (DQ).

This sequence belongs to the UDP-glycosyltransferase family.

Functionally, involved in the detoxification of the Fusarium mycotoxin deoxynivalenol by the transfer of glucose from UDP-D-glucose to the hydroxyl group at C-3, forming deoxynivalenol-3-O-beta-D-glucoside. The sequence is that of UDP-glucosyltransferase UGT13248 from Hordeum vulgare subsp. vulgare (Domesticated barley).